The chain runs to 123 residues: Ribosome-binding factor A (123 aa).

It belongs to the RbfA family. In terms of assembly, monomer. Binds 30S ribosomal subunits, but not 50S ribosomal subunits or 70S ribosomes.

The protein localises to the cytoplasm. Its function is as follows. One of several proteins that assist in the late maturation steps of the functional core of the 30S ribosomal subunit. Associates with free 30S ribosomal subunits (but not with 30S subunits that are part of 70S ribosomes or polysomes). Required for efficient processing of 16S rRNA. May interact with the 5'-terminal helix region of 16S rRNA. The sequence is that of Ribosome-binding factor A from Neisseria meningitidis serogroup A / serotype 4A (strain DSM 15465 / Z2491).